A 428-amino-acid polypeptide reads, in one-letter code: Delta-aminolevulinic acid dehydratase, chloroplastic (428 aa).

The Schiff-base intermediate with substrate role is filled by Lys294. Residues Arg304 and Lys316 each contribute to the 5-aminolevulinate site. Glu332 is a binding site for Mg(2+). The active-site Schiff-base intermediate with substrate is Lys347. 5-aminolevulinate is bound by residues Ser373 and Tyr412.

The protein belongs to the ALAD family. As to quaternary structure, homooctamer. Requires Mg(2+) as cofactor.

The protein localises to the plastid. Its subcellular location is the chloroplast. The enzyme catalyses 2 5-aminolevulinate = porphobilinogen + 2 H2O + H(+). Its pathway is porphyrin-containing compound metabolism; protoporphyrin-IX biosynthesis; coproporphyrinogen-III from 5-aminolevulinate: step 1/4. In terms of biological role, catalyzes an early step in the biosynthesis of tetrapyrroles. Binds two molecules of 5-aminolevulinate per subunit, each at a distinct site, and catalyzes their condensation to form porphobilinogen. The protein is Delta-aminolevulinic acid dehydratase, chloroplastic (HEMB) of Hordeum vulgare (Barley).